The following is a 627-amino-acid chain: Chaperone protein DnaK (627 aa).

Residue Thr-197 is modified to Phosphothreonine; by autocatalysis. Low complexity predominate over residues 596–615; that stretch reads MYAQGGDQGQQAAPQQEQSG. Positions 596–627 are disordered; the sequence is MYAQGGDQGQQAAPQQEQSGDNVEDVEFEEVK. Over residues 617-627 the composition is skewed to acidic residues; the sequence is NVEDVEFEEVK.

This sequence belongs to the heat shock protein 70 family.

Its function is as follows. Acts as a chaperone. The chain is Chaperone protein DnaK from Flavobacterium johnsoniae (strain ATCC 17061 / DSM 2064 / JCM 8514 / BCRC 14874 / CCUG 350202 / NBRC 14942 / NCIMB 11054 / UW101) (Cytophaga johnsonae).